A 285-amino-acid chain; its full sequence is MPHRCAAQVVAGYRSTVSLVLVEHPRPEIAQITLNRPERMNSMAFDVMVPLKEALAQVSYDNSVRVVVLTGAGRGFSSGADHKSAGVVPHVENLTRPTYALRSMELLDDVILMLRRLHQPVIAAVNGPAIGGGLCLALAADIRVASSSAYFRAAGINNGLTASELGLSYLLPRAIGSSRAFEIMLTGRDVSAEEAERIGLVSRQVPDEQLLDACYAIAARMAGFSRPGIELTKRTLWSGLDAASLEAHMQAEGLGQLFVRLLTANFEEAVAARAEQRAPVFTDDT.

The protein belongs to the enoyl-CoA hydratase/isomerase family.

The catalysed reaction is a (3S)-3-hydroxyacyl-CoA = a (2E)-enoyl-CoA + H2O. It carries out the reaction a 4-saturated-(3S)-3-hydroxyacyl-CoA = a (3E)-enoyl-CoA + H2O. Its function is as follows. Could possibly oxidize fatty acids using specific components. The sequence is that of Probable enoyl-CoA hydratase echA12 (echA12) from Mycobacterium bovis (strain ATCC BAA-935 / AF2122/97).